A 398-amino-acid chain; its full sequence is Enoyl-[acyl-carrier-protein] reductase [NADH] (398 aa).

NAD(+)-binding positions include 48 to 53 (GSSTGY), 74 to 75 (FE), 111 to 112 (DA), and 139 to 140 (LA). Substrate is bound at residue Y225. Y235 functions as the Proton donor in the catalytic mechanism. NAD(+) contacts are provided by residues K244 and 273-275 (VVT).

The protein belongs to the TER reductase family. In terms of assembly, monomer.

The enzyme catalyses a 2,3-saturated acyl-[ACP] + NAD(+) = a (2E)-enoyl-[ACP] + NADH + H(+). The protein operates within lipid metabolism; fatty acid biosynthesis. Functionally, involved in the final reduction of the elongation cycle of fatty acid synthesis (FAS II). Catalyzes the reduction of a carbon-carbon double bond in an enoyl moiety that is covalently linked to an acyl carrier protein (ACP). In Pseudomonas aeruginosa (strain UCBPP-PA14), this protein is Enoyl-[acyl-carrier-protein] reductase [NADH].